The chain runs to 719 residues: DNA ligase (719 aa).

Residues 42-46, 92-93, and E126 contribute to the NAD(+) site; these read DAAYD and SL. K128 serves as the catalytic N6-AMP-lysine intermediate. NAD(+) is bound by residues R149, E185, K301, and K325. The Zn(2+) site is built by C430, C433, C448, and C454. One can recognise a BRCT domain in the interval 640–719; that stretch reads ATGSPVEGKT…DDWFKLVGED (80 aa).

This sequence belongs to the NAD-dependent DNA ligase family. LigA subfamily. The cofactor is Mg(2+). Mn(2+) serves as cofactor.

It catalyses the reaction NAD(+) + (deoxyribonucleotide)n-3'-hydroxyl + 5'-phospho-(deoxyribonucleotide)m = (deoxyribonucleotide)n+m + AMP + beta-nicotinamide D-nucleotide.. Its function is as follows. DNA ligase that catalyzes the formation of phosphodiester linkages between 5'-phosphoryl and 3'-hydroxyl groups in double-stranded DNA using NAD as a coenzyme and as the energy source for the reaction. It is essential for DNA replication and repair of damaged DNA. The polypeptide is DNA ligase (Brucella melitensis biotype 2 (strain ATCC 23457)).